We begin with the raw amino-acid sequence, 172 residues long: L-amino acid oxidase (172 aa).

Residue 44–47 coordinates FAD; sequence GPMR. Residues R47 and H103 each coordinate substrate.

Belongs to the flavin monoamine oxidase family. FIG1 subfamily. In terms of assembly, heterodimer; non-covalently linked. FAD is required as a cofactor. Post-translationally, N-glycosylated. In terms of tissue distribution, expressed by the venom gland.

The protein resides in the secreted. It catalyses the reaction an L-alpha-amino acid + O2 + H2O = a 2-oxocarboxylate + H2O2 + NH4(+). The enzyme catalyses L-leucine + O2 + H2O = 4-methyl-2-oxopentanoate + H2O2 + NH4(+). The catalysed reaction is L-phenylalanine + O2 + H2O = 3-phenylpyruvate + H2O2 + NH4(+). It carries out the reaction L-tryptophan + O2 + H2O = indole-3-pyruvate + H2O2 + NH4(+). It catalyses the reaction L-methionine + O2 + H2O = 4-methylsulfanyl-2-oxobutanoate + H2O2 + NH4(+). The enzyme catalyses L-isoleucine + O2 + H2O = (S)-3-methyl-2-oxopentanoate + H2O2 + NH4(+). The catalysed reaction is L-arginine + O2 + H2O = 5-guanidino-2-oxopentanoate + H2O2 + NH4(+). It carries out the reaction L-tyrosine + O2 + H2O = 3-(4-hydroxyphenyl)pyruvate + H2O2 + NH4(+). Activity is increased by Mn(2+) ions. Inhibited by Zn(2+), Ni(2+), Co(2+), Cu(2+) and Al(3+). No significant activity change by Na(+), K(+), Ca(2+), Mg(2+) and Ba(2+) ions. Both isoform are completely inhibited by L-Cys and reduced glutathione. O-phenanthroline, beta-mercaptoethanol and PMSF completely inhibit the enzymatic activity of LAAOII, but have no activity on LAAOI. Iodoacetic acid inhibits the enzymatic activity of LAAOII by 46% but has no effect on the LAAOI activity. In terms of biological role, catalyzes an oxidative deamination of predominantly hydrophobic and aromatic L-amino acids, thus producing hydrogen peroxide that may contribute to the diverse toxic effects of this enzyme. Shows high specificity for L-Arg, L-Met, L-Phe, L-Leu, L-Tyr, L-Ile and L-Trp, low specificity for L-Val, L-Ala, L-Asn, L-Gln, and no specificity for L-Pro, L-Ser, L-Thr, L-Cys, L-Gly and L-Asp. Exhibits diverse biological activities, such as hemorrhage, hemolysis, edema, antibacterial and antiparasitic activities, as well as regulation of platelet aggregation. Its effect on platelets is controversial, since it either induces aggregation or inhibits agonist-induced aggregation. These different effects are probably due to different experimental conditions. The sequence is that of L-amino acid oxidase from Cerastes cerastes (Horned desert viper).